We begin with the raw amino-acid sequence, 251 residues long: Imidazole glycerol phosphate synthase subunit HisF (251 aa).

Catalysis depends on residues Asp-11 and Asp-130.

Belongs to the HisA/HisF family. In terms of assembly, heterodimer of HisH and HisF.

The protein resides in the cytoplasm. The catalysed reaction is 5-[(5-phospho-1-deoxy-D-ribulos-1-ylimino)methylamino]-1-(5-phospho-beta-D-ribosyl)imidazole-4-carboxamide + L-glutamine = D-erythro-1-(imidazol-4-yl)glycerol 3-phosphate + 5-amino-1-(5-phospho-beta-D-ribosyl)imidazole-4-carboxamide + L-glutamate + H(+). The protein operates within amino-acid biosynthesis; L-histidine biosynthesis; L-histidine from 5-phospho-alpha-D-ribose 1-diphosphate: step 5/9. Functionally, IGPS catalyzes the conversion of PRFAR and glutamine to IGP, AICAR and glutamate. The HisF subunit catalyzes the cyclization activity that produces IGP and AICAR from PRFAR using the ammonia provided by the HisH subunit. The protein is Imidazole glycerol phosphate synthase subunit HisF of Flavobacterium psychrophilum (strain ATCC 49511 / DSM 21280 / CIP 103535 / JIP02/86).